The primary structure comprises 255 residues: MNTNKIALIYNKNSKHLAIIEEIKKLFNYCKIEDAEVIIIIGGDGELLHNIHRYMHLNIPFYGLNLGSLGFLMNPLDTKKLLQNIYESTVSVLNPLLMQAEDTNGQIYKALAINEVSIFRKTNQAAKFRIDINGVERMSELVADGALVATPAGSSAYNLSAGGPILPLASNMLCLTPICSFRPRRWHGALLLSSATIKFEILNITKRPVNATADFQEFNNITRVTVKSTKDQHIKLLFNKNHTLEDRIIKEQFGE.

Asp-44 functions as the Proton acceptor in the catalytic mechanism. NAD(+) is bound by residues 44 to 45 (DG), His-49, 114 to 115 (NE), Asp-144, Ala-152, 155 to 160 (SAYNLS), and Gln-216.

This sequence belongs to the NAD kinase family. It depends on a divalent metal cation as a cofactor.

The protein localises to the cytoplasm. The enzyme catalyses NAD(+) + ATP = ADP + NADP(+) + H(+). In terms of biological role, involved in the regulation of the intracellular balance of NAD and NADP, and is a key enzyme in the biosynthesis of NADP. Catalyzes specifically the phosphorylation on 2'-hydroxyl of the adenosine moiety of NAD to yield NADP. The chain is NAD kinase from Rickettsia typhi (strain ATCC VR-144 / Wilmington).